Consider the following 375-residue polypeptide: Holliday junction branch migration complex subunit RuvB (375 aa).

A disordered region spans residues 1 to 50 (MAIVSSKSPDPAERRSQAKTKPSVSEPQDSLVRPQAAPEESQRPEDQIRP). The large ATPase domain (RuvB-L) stretch occupies residues 13-209 (ERRSQAKTKP…FGLVQRLRFY (197 aa)). A compositionally biased stretch (polar residues) spans 19 to 28 (KTKPSVSEPQ). Over residues 40-49 (ESQRPEDQIR) the composition is skewed to basic and acidic residues. Residues isoleucine 48, arginine 49, glycine 90, lysine 93, threonine 94, threonine 95, 156–158 (EDF), arginine 199, tyrosine 209, and arginine 246 each bind ATP. Threonine 94 lines the Mg(2+) pocket. The interval 210–280 (EVEALTDIVQ…IAATALELYN (71 aa)) is small ATPAse domain (RuvB-S). Positions 283–375 (PCGLDWTDRR…LQQLLTEPET (93 aa)) are head domain (RuvB-H). The DNA site is built by arginine 338 and arginine 343.

The protein belongs to the RuvB family. In terms of assembly, homohexamer. Forms an RuvA(8)-RuvB(12)-Holliday junction (HJ) complex. HJ DNA is sandwiched between 2 RuvA tetramers; dsDNA enters through RuvA and exits via RuvB. An RuvB hexamer assembles on each DNA strand where it exits the tetramer. Each RuvB hexamer is contacted by two RuvA subunits (via domain III) on 2 adjacent RuvB subunits; this complex drives branch migration. In the full resolvosome a probable DNA-RuvA(4)-RuvB(12)-RuvC(2) complex forms which resolves the HJ.

Its subcellular location is the cytoplasm. It catalyses the reaction ATP + H2O = ADP + phosphate + H(+). The RuvA-RuvB-RuvC complex processes Holliday junction (HJ) DNA during genetic recombination and DNA repair, while the RuvA-RuvB complex plays an important role in the rescue of blocked DNA replication forks via replication fork reversal (RFR). RuvA specifically binds to HJ cruciform DNA, conferring on it an open structure. The RuvB hexamer acts as an ATP-dependent pump, pulling dsDNA into and through the RuvAB complex. RuvB forms 2 homohexamers on either side of HJ DNA bound by 1 or 2 RuvA tetramers; 4 subunits per hexamer contact DNA at a time. Coordinated motions by a converter formed by DNA-disengaged RuvB subunits stimulates ATP hydrolysis and nucleotide exchange. Immobilization of the converter enables RuvB to convert the ATP-contained energy into a lever motion, pulling 2 nucleotides of DNA out of the RuvA tetramer per ATP hydrolyzed, thus driving DNA branch migration. The RuvB motors rotate together with the DNA substrate, which together with the progressing nucleotide cycle form the mechanistic basis for DNA recombination by continuous HJ branch migration. Branch migration allows RuvC to scan DNA until it finds its consensus sequence, where it cleaves and resolves cruciform DNA. This chain is Holliday junction branch migration complex subunit RuvB, found in Synechococcus elongatus (strain ATCC 33912 / PCC 7942 / FACHB-805) (Anacystis nidulans R2).